We begin with the raw amino-acid sequence, 474 residues long: Proline--tRNA ligase (474 aa).

The protein belongs to the class-II aminoacyl-tRNA synthetase family. ProS type 3 subfamily. Homodimer.

It localises to the cytoplasm. It carries out the reaction tRNA(Pro) + L-proline + ATP = L-prolyl-tRNA(Pro) + AMP + diphosphate. Its function is as follows. Catalyzes the attachment of proline to tRNA(Pro) in a two-step reaction: proline is first activated by ATP to form Pro-AMP and then transferred to the acceptor end of tRNA(Pro). This is Proline--tRNA ligase from Mycoplasma capricolum subsp. capricolum (strain California kid / ATCC 27343 / NCTC 10154).